Here is a 312-residue protein sequence, read N- to C-terminus: Acetyl-coenzyme A carboxylase carboxyl transferase subunit alpha (312 aa).

The region spanning 36–286 is the CoA carboxyltransferase C-terminal domain; it reads NLEKEISKTY…ADYVKKSLNE (251 aa).

The protein belongs to the AccA family. In terms of assembly, acetyl-CoA carboxylase is a heterohexamer composed of biotin carboxyl carrier protein (AccB), biotin carboxylase (AccC) and two subunits each of ACCase subunit alpha (AccA) and ACCase subunit beta (AccD).

It is found in the cytoplasm. It carries out the reaction N(6)-carboxybiotinyl-L-lysyl-[protein] + acetyl-CoA = N(6)-biotinyl-L-lysyl-[protein] + malonyl-CoA. Its pathway is lipid metabolism; malonyl-CoA biosynthesis; malonyl-CoA from acetyl-CoA: step 1/1. Its function is as follows. Component of the acetyl coenzyme A carboxylase (ACC) complex. First, biotin carboxylase catalyzes the carboxylation of biotin on its carrier protein (BCCP) and then the CO(2) group is transferred by the carboxyltransferase to acetyl-CoA to form malonyl-CoA. This chain is Acetyl-coenzyme A carboxylase carboxyl transferase subunit alpha, found in Campylobacter jejuni subsp. jejuni serotype O:23/36 (strain 81-176).